The sequence spans 456 residues: N(6)-adenosine-methyltransferase non-catalytic subunit METTL14 (456 aa).

The tract at residues 43–74 (EIAETRETSRASYDTSAAVSKRKLPEEGKADE) is disordered. The segment covering 65-74 (KLPEEGKADE) has biased composition (basic and acidic residues). Interaction with METTL3 stretches follow at residues 135-136 (RD) and 237-238 (SG). The tract at residues 245-254 (RMCLRKWGFR) is positively charged region required for RNA-binding. Interaction with METTL3 regions lie at residues 255-258 (RSED) and 278-287 (KAIFQRTKEH). The positively charged region required for RNA-binding stretch occupies residues 297 to 298 (HR). The interval 308 to 312 (NVDID) is interaction with METTL3. Residues 395–456 (LRPKTPPPKS…GPHRGVFAPR (62 aa)) are disordered. Residues 410–421 (ASRGGGRGGASA) show a composition bias toward gly residues. Residues 423–441 (RGERGRERNRGSFRGDRGN) are compositionally biased toward basic and acidic residues.

This sequence belongs to the MT-A70-like family. In terms of assembly, heterodimer; heterodimerizes with mettl3 to form an antiparallel heterodimer that constitutes an active methyltransferase. Component of the WMM complex, a N6-methyltransferase complex composed of a catalytic subcomplex, named MAC, and of an associated subcomplex, named MACOM. The MAC subcomplex is composed of mettl3 and mettl14.

It is found in the nucleus. Its function is as follows. The METTL3-METTL14 heterodimer forms a N6-methyltransferase complex that methylates adenosine residues at the N(6) position of some mRNAs and regulates the circadian clock, differentiation of embryonic stem cells and cortical neurogenesis. In the heterodimer formed with mettl3, mettl14 constitutes the RNA-binding scaffold that recognizes the substrate rather than the catalytic core. N6-methyladenosine (m6A), which takes place at the 5'-[AG]GAC-3' consensus sites of some mRNAs, plays a role in mRNA stability and processing. The protein is N(6)-adenosine-methyltransferase non-catalytic subunit METTL14 (mettl14) of Xenopus laevis (African clawed frog).